A 153-amino-acid chain; its full sequence is 6,7-dimethyl-8-ribityllumazine synthase (153 aa).

5-amino-6-(D-ribitylamino)uracil-binding positions include F22, 56-58 (AFE), and 80-82 (AVI). 85 to 86 (ST) serves as a coordination point for (2S)-2-hydroxy-3-oxobutyl phosphate. H88 acts as the Proton donor in catalysis. Residue F113 coordinates 5-amino-6-(D-ribitylamino)uracil. R127 serves as a coordination point for (2S)-2-hydroxy-3-oxobutyl phosphate.

This sequence belongs to the DMRL synthase family.

The enzyme catalyses (2S)-2-hydroxy-3-oxobutyl phosphate + 5-amino-6-(D-ribitylamino)uracil = 6,7-dimethyl-8-(1-D-ribityl)lumazine + phosphate + 2 H2O + H(+). The protein operates within cofactor biosynthesis; riboflavin biosynthesis; riboflavin from 2-hydroxy-3-oxobutyl phosphate and 5-amino-6-(D-ribitylamino)uracil: step 1/2. Functionally, catalyzes the formation of 6,7-dimethyl-8-ribityllumazine by condensation of 5-amino-6-(D-ribitylamino)uracil with 3,4-dihydroxy-2-butanone 4-phosphate. This is the penultimate step in the biosynthesis of riboflavin. This is 6,7-dimethyl-8-ribityllumazine synthase from Clostridium botulinum (strain Eklund 17B / Type B).